We begin with the raw amino-acid sequence, 495 residues long: Histidine--tRNA ligase (495 aa).

Residues 1–10 (MTTDSEQPNT) show a composition bias toward polar residues. The tract at residues 1 to 24 (MTTDSEQPNTDFRPEARAPRGFAD) is disordered. Over residues 12–24 (FRPEARAPRGFAD) the composition is skewed to basic and acidic residues.

The protein belongs to the class-II aminoacyl-tRNA synthetase family. As to quaternary structure, homodimer.

The protein resides in the cytoplasm. It carries out the reaction tRNA(His) + L-histidine + ATP = L-histidyl-tRNA(His) + AMP + diphosphate + H(+). The sequence is that of Histidine--tRNA ligase (hisS) from Caulobacter vibrioides (strain ATCC 19089 / CIP 103742 / CB 15) (Caulobacter crescentus).